The sequence spans 229 residues: PKHD-type hydroxylase Nham_1514 (229 aa).

A Fe2OG dioxygenase domain is found at 78 to 180 (QIFPPLFNRY…RVASFFWLQS (103 aa)). Fe cation-binding residues include His98, Asp100, and His161. Position 171 (Arg171) interacts with 2-oxoglutarate.

Fe(2+) is required as a cofactor. The cofactor is L-ascorbate.

The sequence is that of PKHD-type hydroxylase Nham_1514 from Nitrobacter hamburgensis (strain DSM 10229 / NCIMB 13809 / X14).